The following is a 408-amino-acid chain: MAKGTYEGNKTHVNVGTIGHVDHGKTTLTSAITAVSSAMFPATVQKVAYDSVAKASESQGRRDPTKILTIATSHVEYESDNRHYAHVDCPGHADYIKNMITGAAQMDGAILVVSAEDGVMPQTKEHVLLSRQVGVNYIVVFLNKCDKLDDPEMAEIVEAEVIDVLDHYGFDGSKTPIIRGSAIKAIQAIEAGKDPRTDPDCKCILDLLNALDTYIPDPVREVDKDFLMSIEDVYSIPGRGTVVTGRIERGKIEKGNEVEIVGIRPTQKTTCTGVEMFKKEVVGIAGYNVGCLLRGIERKAVERGQVLAKPGTITPHKKFEAEVYILKKEEGGRHSGFVSGYRPQMYFRTTDVTGVINLQGDAQMIMPGDNANLTIELITPIAMEEKQRFAIREGGKTVGNGVVTKILE.

Residues 10 to 219 form the tr-type G domain; sequence KTHVNVGTIG…ALDTYIPDPV (210 aa). GTP is bound by residues 19–26, 88–92, and 143–146; these read GHVDHGKT, DCPGH, and NKCD. Threonine 26 is a binding site for Mg(2+).

The protein belongs to the TRAFAC class translation factor GTPase superfamily. Classic translation factor GTPase family. EF-Tu/EF-1A subfamily. As to quaternary structure, monomer.

The protein localises to the cytoplasm. It carries out the reaction GTP + H2O = GDP + phosphate + H(+). Functionally, GTP hydrolase that promotes the GTP-dependent binding of aminoacyl-tRNA to the A-site of ribosomes during protein biosynthesis. The chain is Elongation factor Tu from Brachyspira hyodysenteriae (strain ATCC 49526 / WA1).